The primary structure comprises 949 residues: Glycine dehydrogenase (decarboxylating) (949 aa).

An N6-(pyridoxal phosphate)lysine modification is found at K700.

It belongs to the GcvP family. As to quaternary structure, the glycine cleavage system is composed of four proteins: P, T, L and H. The cofactor is pyridoxal 5'-phosphate.

It catalyses the reaction N(6)-[(R)-lipoyl]-L-lysyl-[glycine-cleavage complex H protein] + glycine + H(+) = N(6)-[(R)-S(8)-aminomethyldihydrolipoyl]-L-lysyl-[glycine-cleavage complex H protein] + CO2. Functionally, the glycine cleavage system catalyzes the degradation of glycine. The P protein binds the alpha-amino group of glycine through its pyridoxal phosphate cofactor; CO(2) is released and the remaining methylamine moiety is then transferred to the lipoamide cofactor of the H protein. In Christiangramia forsetii (strain DSM 17595 / CGMCC 1.15422 / KT0803) (Gramella forsetii), this protein is Glycine dehydrogenase (decarboxylating).